Here is a 579-residue protein sequence, read N- to C-terminus: Cytochrome P450 monooxygenase prx9 (579 aa).

Residues 6–25 (LPLGSFVGTTLLLFILYKLV) traverse the membrane as a helical segment. Residues N194, N292, and N390 are each glycosylated (N-linked (GlcNAc...) asparagine). Position 512 (C512) interacts with heme.

Belongs to the cytochrome P450 family. Requires heme as cofactor.

It is found in the membrane. The protein operates within sesquiterpene biosynthesis. Cytochrome P450 monooxygenase; part of the gene cluster that mediates the biosynthesis of PR-toxin, a bicyclic sesquiterpene belonging to the eremophilane class and acting as a mycotoxin. The first step of the pathway is catalyzed by the aristolochene synthase which performs the cyclization of trans,trans-farnesyl diphosphate (FPP) to the bicyclic sesquiterpene aristolochene. Following the formation of aristolochene, the non-oxygenated aristolochene is converted to the trioxygenated intermediate eremofortin B, via 7-epi-neopetasone. This conversion appears to involve three enzymes, a hydroxysterol oxidase-like enzyme, the quinone-oxidase prx3 that forms the quinone-type-structure in the bicyclic nucleus of aristolochene with the C8-oxo group and the C-3 hydroxyl group, and the P450 monooxygenase prx9 that introduces the epoxide at the double bond between carbons 1 and 2. No monoxy or dioxy-intermediates have been reported to be released to the broth, so these three early oxidative reactions may be coupled together. Eremofortin B is further oxidized by another P450 monooxygenase, that introduces a second epoxide between carbons 7 and 11 prior to acetylation to eremofortin A by the acetyltransferase prx11. The second epoxidation may be performed by a second P450 monooxygenase. After the acetylation step, eremofortin A is converted to eremofortin C and then to PR-toxin. First the conversion of eremofortin A to eremofortin C proceeds by oxidation of the side chain of the molecule at C-12 and is catalyzed by the short-chain oxidoreductase prx1. The cytochrome P450 monooxygenase prx8 also plays a role in this step. The primary alcohol formed at C-12 is finally oxidized by the short-chain alcohol dehydrogenase prx4 that forms PR-toxin. This chain is Cytochrome P450 monooxygenase prx9, found in Penicillium rubens (strain ATCC 28089 / DSM 1075 / NRRL 1951 / Wisconsin 54-1255) (Penicillium chrysogenum).